A 465-amino-acid chain; its full sequence is Cysteine--tRNA ligase (465 aa).

Position 27 (Cys27) interacts with Zn(2+). The 'HIGH' region signature appears at 29-39 (PTVYNFFHIGN). Zn(2+) is bound by residues Cys207, His232, and Glu236. Positions 264–268 (KMSKS) match the 'KMSKS' region motif. Lys267 is an ATP binding site.

It belongs to the class-I aminoacyl-tRNA synthetase family. Monomer. Zn(2+) is required as a cofactor.

It is found in the cytoplasm. The enzyme catalyses tRNA(Cys) + L-cysteine + ATP = L-cysteinyl-tRNA(Cys) + AMP + diphosphate. This chain is Cysteine--tRNA ligase, found in Clostridium botulinum (strain Kyoto / Type A2).